A 433-amino-acid chain; its full sequence is Lipase 2 (433 aa).

An Involved in the stabilization of the negatively charged intermediate by the formation of the oxyanion hole motif is present at residues 165 to 167; the sequence is HGG. Serine 239 serves as the catalytic Charge relay system. Active-site residues include aspartate 361 and histidine 391.

The protein belongs to the 'GDXG' lipolytic enzyme family.

It catalyses the reaction a triacylglycerol + H2O = a diacylglycerol + a fatty acid + H(+). The chain is Lipase 2 (lip2) from Moraxella sp. (strain TA144).